The following is a 143-amino-acid chain: Nucleoside diphosphate kinase (143 aa).

6 residues coordinate ATP: Lys-11, Phe-59, Arg-87, Thr-93, Arg-104, and Asn-114. The Pros-phosphohistidine intermediate role is filled by His-117.

The protein belongs to the NDK family. In terms of assembly, homotetramer. The cofactor is Mg(2+).

The protein localises to the cytoplasm. The enzyme catalyses a 2'-deoxyribonucleoside 5'-diphosphate + ATP = a 2'-deoxyribonucleoside 5'-triphosphate + ADP. The catalysed reaction is a ribonucleoside 5'-diphosphate + ATP = a ribonucleoside 5'-triphosphate + ADP. Functionally, major role in the synthesis of nucleoside triphosphates other than ATP. The ATP gamma phosphate is transferred to the NDP beta phosphate via a ping-pong mechanism, using a phosphorylated active-site intermediate. The sequence is that of Nucleoside diphosphate kinase from Sodalis glossinidius (strain morsitans).